The primary structure comprises 209 residues: Thiamine-phosphate synthase (209 aa).

Residues 32-36 (QLRMK) and Asp64 each bind 4-amino-2-methyl-5-(diphosphooxymethyl)pyrimidine. Residues Asp65 and Asp84 each coordinate Mg(2+). Position 103 (Thr103) interacts with 4-amino-2-methyl-5-(diphosphooxymethyl)pyrimidine. A 2-[(2R,5Z)-2-carboxy-4-methylthiazol-5(2H)-ylidene]ethyl phosphate-binding site is contributed by 129-131 (TTT). Position 132 (Lys132) interacts with 4-amino-2-methyl-5-(diphosphooxymethyl)pyrimidine. Gly165 serves as a coordination point for 2-[(2R,5Z)-2-carboxy-4-methylthiazol-5(2H)-ylidene]ethyl phosphate.

Belongs to the thiamine-phosphate synthase family. Mg(2+) is required as a cofactor.

The enzyme catalyses 2-[(2R,5Z)-2-carboxy-4-methylthiazol-5(2H)-ylidene]ethyl phosphate + 4-amino-2-methyl-5-(diphosphooxymethyl)pyrimidine + 2 H(+) = thiamine phosphate + CO2 + diphosphate. It carries out the reaction 2-(2-carboxy-4-methylthiazol-5-yl)ethyl phosphate + 4-amino-2-methyl-5-(diphosphooxymethyl)pyrimidine + 2 H(+) = thiamine phosphate + CO2 + diphosphate. It catalyses the reaction 4-methyl-5-(2-phosphooxyethyl)-thiazole + 4-amino-2-methyl-5-(diphosphooxymethyl)pyrimidine + H(+) = thiamine phosphate + diphosphate. The protein operates within cofactor biosynthesis; thiamine diphosphate biosynthesis; thiamine phosphate from 4-amino-2-methyl-5-diphosphomethylpyrimidine and 4-methyl-5-(2-phosphoethyl)-thiazole: step 1/1. Its function is as follows. Condenses 4-methyl-5-(beta-hydroxyethyl)thiazole monophosphate (THZ-P) and 2-methyl-4-amino-5-hydroxymethyl pyrimidine pyrophosphate (HMP-PP) to form thiamine monophosphate (TMP). In Bacteroides thetaiotaomicron (strain ATCC 29148 / DSM 2079 / JCM 5827 / CCUG 10774 / NCTC 10582 / VPI-5482 / E50), this protein is Thiamine-phosphate synthase.